The following is a 166-amino-acid chain: Disulfide bond formation protein B (166 aa).

At 1 to 12 (MKITKLPSYRQT) the chain is on the cytoplasmic side. The helical transmembrane segment at 13–29 (ALIIFAGCVGLILAALY) threads the bilayer. The Periplasmic portion of the chain corresponds to 30–47 (MQEVLGLHPCPLCITQRI). Cys-39 and Cys-42 are oxidised to a cystine. A helical transmembrane segment spans residues 48–64 (FIIGVGLISLIAAIHNP). The Cytoplasmic segment spans residues 65 to 70 (AALGRK). A helical transmembrane segment spans residues 71–88 (VYGCLATLSGVIGAGVSA). Residues 89–145 (RHVWLQNLPEDQVPACGPDLAYMFDAFPLLDALKLLFAGDGNCADVVASFLGLSIPG) are Periplasmic-facing. A disulfide bridge links Cys-104 with Cys-131. The helical transmembrane segment at 146 to 164 (WTFVAFVGLIAISVWQGLR) threads the bilayer. The Cytoplasmic portion of the chain corresponds to 165–166 (KA).

It belongs to the DsbB family.

Its subcellular location is the cell inner membrane. Functionally, required for disulfide bond formation in some periplasmic proteins. Acts by oxidizing the DsbA protein. The protein is Disulfide bond formation protein B of Saccharophagus degradans (strain 2-40 / ATCC 43961 / DSM 17024).